A 347-amino-acid chain; its full sequence is tRNA N6-adenosine threonylcarbamoyltransferase (347 aa).

The Fe cation site is built by His111 and His115. Substrate contacts are provided by residues 134–138 (LVSGG), Asp167, Gly180, and Asn277. Position 305 (Asp305) interacts with Fe cation.

Belongs to the KAE1 / TsaD family. Fe(2+) serves as cofactor.

It is found in the cytoplasm. The enzyme catalyses L-threonylcarbamoyladenylate + adenosine(37) in tRNA = N(6)-L-threonylcarbamoyladenosine(37) in tRNA + AMP + H(+). Required for the formation of a threonylcarbamoyl group on adenosine at position 37 (t(6)A37) in tRNAs that read codons beginning with adenine. Is involved in the transfer of the threonylcarbamoyl moiety of threonylcarbamoyl-AMP (TC-AMP) to the N6 group of A37, together with TsaE and TsaB. TsaD likely plays a direct catalytic role in this reaction. The sequence is that of tRNA N6-adenosine threonylcarbamoyltransferase from Ralstonia pickettii (strain 12J).